The sequence spans 118 residues: Large ribosomal subunit protein bL20 (118 aa).

This sequence belongs to the bacterial ribosomal protein bL20 family.

Functionally, binds directly to 23S ribosomal RNA and is necessary for the in vitro assembly process of the 50S ribosomal subunit. It is not involved in the protein synthesizing functions of that subunit. This chain is Large ribosomal subunit protein bL20, found in Aliarcobacter butzleri (strain RM4018) (Arcobacter butzleri).